The chain runs to 78 residues: Small ribosomal subunit protein uS17 (78 aa).

The protein belongs to the universal ribosomal protein uS17 family. In terms of assembly, part of the 30S ribosomal subunit.

Functionally, one of the primary rRNA binding proteins, it binds specifically to the 5'-end of 16S ribosomal RNA. The chain is Small ribosomal subunit protein uS17 from Pelagibacter ubique (strain HTCC1062).